Reading from the N-terminus, the 287-residue chain is Hydroxysteroid 11-beta-dehydrogenase 1-like protein (287 aa).

The N-terminal stretch at 1 to 15 is a signal peptide; it reads MKVLLLTGLGALFFA. Residues 36–62, 87–88, and 114–116 contribute to the NADP(+) site; these read GASA…TAHT, DM, and NHI. Ser165 is a binding site for substrate. Tyr178 serves as the catalytic Proton acceptor. NADP(+) contacts are provided by residues 178-182 and 211-217; these read YSAAK and GLRDRAS.

Belongs to the short-chain dehydrogenases/reductases (SDR) family.

Its subcellular location is the secreted. The catalysed reaction is cortisone + NADPH + H(+) = cortisol + NADP(+). Functionally, unidirectional NADP(+)-dependent cortisol dehydrogenase (in vitro). This Macaca fascicularis (Crab-eating macaque) protein is Hydroxysteroid 11-beta-dehydrogenase 1-like protein (HSD11B1L).